We begin with the raw amino-acid sequence, 260 residues long: Small ribosomal subunit protein eS1 (260 aa).

Ala2 carries the post-translational modification N-acetylalanine; partial.

It belongs to the eukaryotic ribosomal protein eS1 family. Component of the small ribosomal subunit. Mature ribosomes consist of a small (40S) and a large (60S) subunit. The 40S subunit contains about 33 different proteins and 1 molecule of RNA (18S). The 60S subunit contains about 49 different proteins and 3 molecules of RNA (25S, 5.8S and 5S).

It localises to the cytoplasm. This is Small ribosomal subunit protein eS1 from Mycosarcoma maydis (Corn smut fungus).